The following is a 308-amino-acid chain: MNKELQPKVVFLMGPTASGKTALALELAEKHNCEIISVDSALIYRGMDIGSAKPSAEELARGPHRLIDIRDPSESYSAADFRADALSEIEQIISMGKTPLLVGGTMMYFKALLEGLSPLPSADEVIRADIQAEADANGWEALHDQLREIDPVSAERIHPNDPQRLSRALEVYRISGKSLTELTMTKSAPLPYNVVQFAIAPRERKVLHELIGQRFRIMLEQGFIDEVAQLKARDDLHLDLPSMRCVGYRQCWQYLDGEFDHDTMVEKAIAATRQLAKRQLTWLRSWPELNWLESGAEGNLVTLMRHCR.

14-21 is an ATP binding site; that stretch reads GPTASGKT. Substrate is bound at residue 16–21; it reads TASGKT. Interaction with substrate tRNA regions lie at residues 39–42, 163–167, and 244–249; these read DSAL, QRLSR, and RCVGYR.

The protein belongs to the IPP transferase family. As to quaternary structure, monomer. Mg(2+) is required as a cofactor.

The enzyme catalyses adenosine(37) in tRNA + dimethylallyl diphosphate = N(6)-dimethylallyladenosine(37) in tRNA + diphosphate. Its function is as follows. Catalyzes the transfer of a dimethylallyl group onto the adenine at position 37 in tRNAs that read codons beginning with uridine, leading to the formation of N6-(dimethylallyl)adenosine (i(6)A). The sequence is that of tRNA dimethylallyltransferase from Shewanella oneidensis (strain ATCC 700550 / JCM 31522 / CIP 106686 / LMG 19005 / NCIMB 14063 / MR-1).